Consider the following 359-residue polypeptide: MSFDSGLEELSEKFYKLKHLLEDPSQLSVESFVNASKEYSELLPIISVIDEYNAVQKDIKDLQELINNQETDTELKNLAKEEFYELQKQLPKVKHKLKLSLLPKDKDDARNAILEIRAGTGGEEAALFVTDLYRMYIKYAEKKNWKIEQINSSSTGIGGHKEVSLCVSGSNVFAKLKFESGVHRVQRVPETEASGRLHTSAATVAVLPEIEEVDLKIDEKDLRIDVYRSSGPGGQSVNTTDSAVRITHIPSGIVVIQQDEKSQHKNKNKALKVLRARLYDLEKQKRDAEISQLRKSQIGSGDRSERIRTYNFPQSRITDHRINLTLYRLEDIMKEGDLDELIEALIAEDEANKLKNLNI.

Glutamine 235 carries the N5-methylglutamine modification.

This sequence belongs to the prokaryotic/mitochondrial release factor family. In terms of processing, methylated by PrmC. Methylation increases the termination efficiency of RF1.

The protein localises to the cytoplasm. In terms of biological role, peptide chain release factor 1 directs the termination of translation in response to the peptide chain termination codons UAG and UAA. This is Peptide chain release factor 1 from Ehrlichia ruminantium (strain Gardel).